The sequence spans 886 residues: MGMTIEHYKIGERYNPRAREKKWQEIWDEKKIFQTVQGDGREKYYVLEMFPYPSGRIHMGHVRNYAMGDVVARYKRAKGFNVLHPMGWDAFGMPAENAALQSKVHPKTWTYENIAVMRGQLKQLGLSLDWAREFATCDVDYYHRQQMLFLDFYQKGLVARKVAKVNWDPVDHTVLANEQVVDGRGWRSGALVEQRELTQWFFKISDFSEDLLAGLEELDQWPEKVRTMQKNWIGKSQGLLIRWALKSTADDAGGSNDVCEAFDEVVCYSTRPDTLFGASFLALSVDHPIAQSLAKKDKALAAFIENCRCGGTTTAALETAEKQGFLTPLVAVHPFDETVHIPVYIANFVLMDYGTGAIFGCPAHDQRDFDFARKYDLPIKPVVLPRETKVEDFVLAEMPYTGDGVMINSSFLDGLTPQQAFEEVAKRLEQQVLHGQPQGKKTVQFRLRDWGISRQRYWGCPIPMIHCTSCGVVPVPRADLPVVLPDDVTFDQPGNPLARHEMWQDVACPICGQPAKRETDTMDTFVDSSWYYARFTAPFAPEPVEKQATAEWLPVQQYIGGIEHAILHLLYARFFMRAMKLVGHVSVDEPFKGLFTQGMVVHETYRDDQGWVSPAEISIVEKDGKRCAYKLTDQSEVTIGLIEKMSKSKKNVVDPDDIIASYGADTVRWFVLSDSPPERDVIWTESGVEGAHRFVQRVWRHVALSAAVLKDVAPRAGHQGAALELSKAAHRMLHAVEDDLEKFAFNRAIARLYEFLNIMAPLLNKVADVEDEMKAALRQAMDFFLAMIAPIMPHLAEECHAALGETTLMSELAWPVYDPALIVEESYTLPVQINGKKRGEVTVAATASETMIKEAVLALDFVQAQLVEKPMKKIIIVPQRIVNVVL.

The 'HIGH' region motif lies at 51 to 61 (PYPSGRIHMGH). The 'KMSKS' region motif lies at 644 to 648 (KMSKS). Lys647 provides a ligand contact to ATP.

Belongs to the class-I aminoacyl-tRNA synthetase family.

The protein resides in the cytoplasm. The enzyme catalyses tRNA(Leu) + L-leucine + ATP = L-leucyl-tRNA(Leu) + AMP + diphosphate. The polypeptide is Leucine--tRNA ligase (Bartonella tribocorum (strain CIP 105476 / IBS 506)).